Reading from the N-terminus, the 217-residue chain is Ribonuclease HII (217 aa).

An RNase H type-2 domain is found at 27-216 (SQVAGVDEAG…VKESIQEGVC (190 aa)). A divalent metal cation contacts are provided by Asp-33, Glu-34, and Asp-126.

The protein belongs to the RNase HII family. It depends on Mn(2+) as a cofactor. The cofactor is Mg(2+).

It is found in the cytoplasm. It carries out the reaction Endonucleolytic cleavage to 5'-phosphomonoester.. Functionally, endonuclease that specifically degrades the RNA of RNA-DNA hybrids. The chain is Ribonuclease HII (rnhB) from Chlamydia trachomatis serovar D (strain ATCC VR-885 / DSM 19411 / UW-3/Cx).